Here is a 140-residue protein sequence, read N- to C-terminus: MDNKMRLEFLAKSENEGFARVSVSAFIAQLDPTIEELTDIKTAVSEAVTNAIIHGYECDESKVVIIEASICEDEISITVEDNGIGIENLEEAREPLYTSKPELERSGMGFTVMETFMDSLEVYSEKNKGTKIIMKKKMNT.

This sequence belongs to the anti-sigma-factor family.

It catalyses the reaction L-seryl-[protein] + ATP = O-phospho-L-seryl-[protein] + ADP + H(+). The catalysed reaction is L-threonyl-[protein] + ATP = O-phospho-L-threonyl-[protein] + ADP + H(+). Binds to sigma F and blocks its ability to form an RNA polymerase holoenzyme (E-sigma F). Phosphorylates SpoIIAA on a serine residue. This phosphorylation may enable SpoIIAA to act as an anti-anti-sigma factor that counteracts SpoIIAB and thus releases sigma F from inhibition. The protein is Anti-sigma F factor of Clostridium perfringens (strain SM101 / Type A).